Consider the following 463-residue polypeptide: Probable ECA polymerase (463 aa).

11 helical membrane-spanning segments follow: residues 6–26, 39–59, 65–85, 112–132, 154–174, 180–200, 201–221, 222–242, 340–360, 377–397, and 408–428; these read FGGL…LTWM, FSLL…VLVF, VVPV…YAIY, ANLT…IFFL, GVAL…VYFL, AWLM…VIVG, GTRA…IVRG, WITL…MFWL, LVVM…GLVI, YKAA…IVLT, and VVFF…LYWL.

The protein belongs to the WzyE family. As to quaternary structure, probably part of a complex composed of WzxE, WzyE and WzzE.

It is found in the cell inner membrane. The protein operates within bacterial outer membrane biogenesis; enterobacterial common antigen biosynthesis. Its function is as follows. Probably involved in the polymerization of enterobacterial common antigen (ECA) trisaccharide repeat units. The polypeptide is Probable ECA polymerase (Pectobacterium carotovorum subsp. carotovorum (strain PC1)).